We begin with the raw amino-acid sequence, 92 residues long: 11 kDa excretory-secretory protein (92 aa).

The protein is 11 kDa excretory-secretory protein of Trichostrongylus colubriformis (Black scour worm).